Here is a 195-residue protein sequence, read N- to C-terminus: HTH-type transcriptional regulator BetI (195 aa).

Residues 8-68 (SIRRRQLIDA…ATMRDITSQL (61 aa)) enclose the HTH tetR-type domain. A DNA-binding region (H-T-H motif) is located at residues 31-50 (TIAQIARRAGVSTGIISHYF).

The protein operates within amine and polyamine biosynthesis; betaine biosynthesis via choline pathway [regulation]. In terms of biological role, repressor involved in the biosynthesis of the osmoprotectant glycine betaine. It represses transcription of the choline transporter BetT and the genes of BetAB involved in the synthesis of glycine betaine. The polypeptide is HTH-type transcriptional regulator BetI (Escherichia coli (strain SMS-3-5 / SECEC)).